Here is a 773-residue protein sequence, read N- to C-terminus: Transducin-like enhancer protein 4 (773 aa).

Disordered regions lie at residues 1-22 (MIRD…QPAQ), 140-162 (HGHG…AIPP), and 182-360 (LPIK…ASSL). The q domain stretch occupies residues 1–136 (MIRDLSKMYP…AIIGQQLQAQ (136 aa)). Residues 137-204 (HLSHGHGLPV…HQRDRDSIKS (68 aa)) form a GP domain region. Over residues 183–202 (PIKDEKKHHDNDHQRDRDSI) the composition is skewed to basic and acidic residues. The span at 203–212 (KSSSVSPSAS) shows a compositional bias: low complexity. The tract at residues 205 to 274 (SSVSPSASFR…SPRGSPAHSP (70 aa)) is ccN domain. S208, S212, and S222 each carry phosphoserine. Positions 215 to 252 (GAEKHRNSADYSSESKKQKTEEKEIAARYDSDGEKSDD) are enriched in basic and acidic residues. At K237 the chain carries N6-acetyllysine. Phosphoserine is present on residues S245, S250, S269, and S273. Residues 273–289 (SPRENGLDKTRLLKKDA) are compositionally biased toward basic and acidic residues. The interval 275–452 (RENGLDKTRL…PGGKPAYSFH (178 aa)) is SP domain. The residue at position 281 (K281) is an N6-acetyllysine. The segment covering 290 to 305 (PISPASIASSSSTPSS) has biased composition (low complexity). At S292 the chain carries Phosphoserine. The segment covering 317-328 (TTPVSKSNTPTP) has biased composition (polar residues). T318 is subject to Phosphothreonine. S321 and S323 each carry phosphoserine. Phosphothreonine is present on residues T325, T327, T334, and T340. S419 is subject to Phosphoserine. 7 WD repeats span residues 485-523 (NHGE…NKSP), 531-570 (NRDN…PRIK), 575-614 (SSAP…LVRQ), 617-656 (GHTD…QLQQ), 658-697 (DFTS…KYQL), 699-738 (LHES…SIFQ), and 740-773 (KESS…EVIY).

It belongs to the WD repeat Groucho/TLE family. In terms of assembly, homooligomer and heterooligomer with other family members. Interacts with PAX5. Interacts with LEF1, TCF7, TCF7L1 and TCF7L2. Interacts with ZNF703; TLE4 may mediate ZNF703 transcriptional repression. Interacts with SIX3 and SIX6. Interacts with PAX2. Interacts with TLE1. In terms of processing, phosphorylated. PAX5 binding increases phosphorylation. Post-translationally, ubiquitinated by XIAP/BIRC4. In all tissues examined, mostly in brain, and muscle.

The protein resides in the nucleus. Its function is as follows. Transcriptional corepressor that binds to a number of transcription factors. Inhibits the transcriptional activation mediated by PAX5, and by CTNNB1 and TCF family members in Wnt signaling. The effects of full-length TLE family members may be modulated by association with dominant-negative AES. Essential for the transcriptional repressor activity of SIX3 during retina and lens development and for SIX3 transcriptional auto-repression. Involved in transcriptional repression of GNRHR and enhances MSX1-mediated transcriptional repression of CGA/alpha-GSU. The protein is Transducin-like enhancer protein 4 (TLE4) of Homo sapiens (Human).